A 115-amino-acid polypeptide reads, in one-letter code: Large ribosomal subunit protein bL19 (115 aa).

This sequence belongs to the bacterial ribosomal protein bL19 family.

In terms of biological role, this protein is located at the 30S-50S ribosomal subunit interface and may play a role in the structure and function of the aminoacyl-tRNA binding site. The polypeptide is Large ribosomal subunit protein bL19 (Streptococcus pneumoniae serotype 2 (strain D39 / NCTC 7466)).